A 276-amino-acid polypeptide reads, in one-letter code: ATP synthase subunit a (276 aa).

Transmembrane regions (helical) follow at residues 27-47 (ITML…LEVG), 61-81 (GQTF…SLAA), 120-140 (LPFI…GALL), 159-179 (DINT…YAGL), 225-245 (LVVA…LMAL), and 246-266 (GLFT…AYIH).

This sequence belongs to the ATPase A chain family. In terms of assembly, F-type ATPases have 2 components, CF(1) - the catalytic core - and CF(0) - the membrane proton channel. CF(1) has five subunits: alpha(3), beta(3), gamma(1), delta(1), epsilon(1). CF(0) has four main subunits: a, b, b' and c.

The protein resides in the cellular thylakoid membrane. Its function is as follows. Key component of the proton channel; it plays a direct role in the translocation of protons across the membrane. The polypeptide is ATP synthase subunit a (Synechocystis sp. (strain ATCC 27184 / PCC 6803 / Kazusa)).